Reading from the N-terminus, the 327-residue chain is GTP 3',8-cyclase (327 aa).

In terms of domain architecture, Radical SAM core spans Ala-4–Arg-226. Arg-13 serves as a coordination point for GTP. The [4Fe-4S] cluster site is built by Cys-20 and Cys-24. Tyr-26 provides a ligand contact to S-adenosyl-L-methionine. Cys-27 is a [4Fe-4S] cluster binding site. Arg-63 provides a ligand contact to GTP. Residue Gly-67 coordinates S-adenosyl-L-methionine. GTP is bound at residue Thr-94. Position 118 (Ser-118) interacts with S-adenosyl-L-methionine. Residue Lys-155 coordinates GTP. Met-189 is a binding site for S-adenosyl-L-methionine. Residues Cys-254 and Cys-257 each contribute to the [4Fe-4S] cluster site. Arg-259–Arg-261 serves as a coordination point for GTP. Cys-271 provides a ligand contact to [4Fe-4S] cluster.

It belongs to the radical SAM superfamily. MoaA family. Monomer and homodimer. [4Fe-4S] cluster is required as a cofactor.

It catalyses the reaction GTP + AH2 + S-adenosyl-L-methionine = (8S)-3',8-cyclo-7,8-dihydroguanosine 5'-triphosphate + 5'-deoxyadenosine + L-methionine + A + H(+). It functions in the pathway cofactor biosynthesis; molybdopterin biosynthesis. Catalyzes the cyclization of GTP to (8S)-3',8-cyclo-7,8-dihydroguanosine 5'-triphosphate. The sequence is that of GTP 3',8-cyclase from Heliobacterium modesticaldum (strain ATCC 51547 / Ice1).